Here is a 285-residue protein sequence, read N- to C-terminus: Pantothenate synthetase (285 aa).

30-37 (MGFLHEGH) is an ATP binding site. Catalysis depends on His37, which acts as the Proton donor. (R)-pantoate is bound at residue Gln61. Gln61 contacts beta-alanine. 147-150 (GQKD) lines the ATP pocket. Gln153 is a (R)-pantoate binding site. Residues Val176 and 184–187 (KSSR) each bind ATP.

It belongs to the pantothenate synthetase family. In terms of assembly, homodimer.

Its subcellular location is the cytoplasm. The catalysed reaction is (R)-pantoate + beta-alanine + ATP = (R)-pantothenate + AMP + diphosphate + H(+). It functions in the pathway cofactor biosynthesis; (R)-pantothenate biosynthesis; (R)-pantothenate from (R)-pantoate and beta-alanine: step 1/1. Functionally, catalyzes the condensation of pantoate with beta-alanine in an ATP-dependent reaction via a pantoyl-adenylate intermediate. The polypeptide is Pantothenate synthetase (Listeria welshimeri serovar 6b (strain ATCC 35897 / DSM 20650 / CCUG 15529 / CIP 8149 / NCTC 11857 / SLCC 5334 / V8)).